Here is a 669-residue protein sequence, read N- to C-terminus: DNA ligase (669 aa).

NAD(+)-binding positions include 33–37 (DAEYD), 82–83 (SL), and E114. The active-site N6-AMP-lysine intermediate is the K116. 4 residues coordinate NAD(+): R137, E174, K291, and K315. 4 residues coordinate Zn(2+): C409, C412, C427, and C433. Residues 593–669 (EIPQPLAGKV…QTEQDLLALL (77 aa)) form the BRCT domain.

It belongs to the NAD-dependent DNA ligase family. LigA subfamily. Requires Mg(2+) as cofactor. It depends on Mn(2+) as a cofactor.

It carries out the reaction NAD(+) + (deoxyribonucleotide)n-3'-hydroxyl + 5'-phospho-(deoxyribonucleotide)m = (deoxyribonucleotide)n+m + AMP + beta-nicotinamide D-nucleotide.. Functionally, DNA ligase that catalyzes the formation of phosphodiester linkages between 5'-phosphoryl and 3'-hydroxyl groups in double-stranded DNA using NAD as a coenzyme and as the energy source for the reaction. It is essential for DNA replication and repair of damaged DNA. The chain is DNA ligase from Vibrio vulnificus (strain YJ016).